Reading from the N-terminus, the 187-residue chain is Large ribosomal subunit protein uL6c (187 aa).

This sequence belongs to the universal ribosomal protein uL6 family. In terms of assembly, part of the 50S ribosomal subunit.

Its subcellular location is the plastid. The protein localises to the chloroplast. Its function is as follows. Binds 23S rRNA. The protein is Large ribosomal subunit protein uL6c (rpl6) of Thalassiosira pseudonana (Marine diatom).